The following is a 569-amino-acid chain: BICD family-like cargo adapter 1 (569 aa).

Residues 1–36 (MSASCLDLISAPPQPDSDRMDRALNPGRQNSPDTAG) form a disordered region. The CC1 box signature appears at 97–101 (AAKLG). Positions 102 to 283 (KALLERNQDL…TLELEKHCHH (182 aa)) form a coiled coil. The disordered stretch occupies residues 385–405 (ALSTDSSMDESSETLSAKDVP). Residues 458–520 (NEQLQSAIRD…LEAWQDDMHR (63 aa)) adopt a coiled-coil conformation. The segment at 533–554 (EWKDPPFSFSRRGAAASRPTQR) is disordered.

Belongs to the BICDR family. In terms of assembly, part of a tripartite complex with dynein and dynactin, acts an adapter linking the dynein motor complex and dynactin. As to expression, highly expressed in developing neural tissues and developing eye.

It localises to the cytoplasm. The protein resides in the cytoskeleton. The protein localises to the microtubule organizing center. Its subcellular location is the centrosome. Its function is as follows. Acts as an adapter protein linking the dynein motor complex to various cargos and converts dynein from a non-processive to a highly processive motor in the presence of dynactin. Facilitates the interaction between dynein and dynactin and activates dynein processivity (the ability to move along a microtubule for a long distance without falling off the track). Predominantly recruits 2 dyneins, which increases both the force and speed of the microtubule motor. Component of secretory vesicle machinery in developing neurons that acts as a regulator of neurite outgrowth. Regulates the secretory vesicle transport by controlling the accumulation of Rab6-containing secretory vesicles in the pericentrosomal region restricting anterograde secretory transport during the early phase of neuronal differentiation, thereby inhibiting neuritogenesis. The protein is BICD family-like cargo adapter 1 (bicdl1) of Danio rerio (Zebrafish).